The chain runs to 115 residues: Large ribosomal subunit protein bL19 (115 aa).

This sequence belongs to the bacterial ribosomal protein bL19 family.

In terms of biological role, this protein is located at the 30S-50S ribosomal subunit interface and may play a role in the structure and function of the aminoacyl-tRNA binding site. This Alkaliphilus oremlandii (strain OhILAs) (Clostridium oremlandii (strain OhILAs)) protein is Large ribosomal subunit protein bL19.